Consider the following 282-residue polypeptide: High mobility group nucleosome-binding domain-containing protein 5 (282 aa).

The tract at residues 1-282 (MPKRKAAGQG…GKKEEPQSIV (282 aa)) is disordered. A Phosphothreonine modification is found at Thr31. Residues 37–46 (KRTSSSRKMK) are compositionally biased toward basic residues. Lys67 is covalently cross-linked (Glycyl lysine isopeptide (Lys-Gly) (interchain with G-Cter in SUMO2)). Residue Tyr76 is modified to Phosphotyrosine. Residues 81 to 119 (KNGEAKITEAPASEKEIVEVKEENIEDATEKGGEKKEAV) show a composition bias toward basic and acidic residues. Residue Ser93 is modified to Phosphoserine. Lys101 is covalently cross-linked (Glycyl lysine isopeptide (Lys-Gly) (interchain with G-Cter in SUMO1); alternate). A Glycyl lysine isopeptide (Lys-Gly) (interchain with G-Cter in SUMO2); alternate cross-link involves residue Lys101. Lys124 is covalently cross-linked (Glycyl lysine isopeptide (Lys-Gly) (interchain with G-Cter in SUMO2)). Residues 125–138 (NEEEDQKEDEEDQN) are compositionally biased toward acidic residues. Composition is skewed to basic and acidic residues over residues 139–152 (EEKG…KDEK) and 158–256 (KEDK…KEDL). Residues 257–270 (KEEEEGKEEDEIKE) show a composition bias toward acidic residues. Basic and acidic residues predominate over residues 271 to 282 (DDGKKEEPQSIV).

Belongs to the HMGN family. In terms of tissue distribution, ubiquitously expressed.

The protein resides in the nucleus. Preferentially binds to euchromatin and modulates cellular transcription by counteracting linker histone-mediated chromatin compaction. In Homo sapiens (Human), this protein is High mobility group nucleosome-binding domain-containing protein 5 (HMGN5).